Here is a 68-residue protein sequence, read N- to C-terminus: Large ribosomal subunit protein eL24 (68 aa).

Positions 7, 10, 33, and 37 each coordinate Zn(2+). The segment at 7-37 (CSYCGREFEPGTGKMFVRNDGRVLFFCSSKC) adopts a C4-type zinc-finger fold.

Belongs to the eukaryotic ribosomal protein eL24 family. Part of the 50S ribosomal subunit. Forms a cluster with proteins L3 and L14. It depends on Zn(2+) as a cofactor.

Binds to the 23S rRNA. The polypeptide is Large ribosomal subunit protein eL24 (Thermococcus onnurineus (strain NA1)).